We begin with the raw amino-acid sequence, 673 residues long: UvrABC system protein B (673 aa).

Residues 26–183 form the Helicase ATP-binding domain; it reads EGLEDGLAHQ…RRLAELQYTR (158 aa). 39-46 lines the ATP pocket; that stretch reads GVTGSGKT. The Beta-hairpin motif lies at 92 to 115; sequence YYDYYQPEAYVPSSDTFIEKDASV. Residues 431–597 enclose the Helicase C-terminal domain; the sequence is QVDDLLSEIR…GLNKKVVDIL (167 aa). The UVR domain maps to 633-668; sequence QQKIHELEGQMMQHAQNLEFEEAAQIRDQLHQLREL.

This sequence belongs to the UvrB family. In terms of assembly, forms a heterotetramer with UvrA during the search for lesions. Interacts with UvrC in an incision complex.

Its subcellular location is the cytoplasm. In terms of biological role, the UvrABC repair system catalyzes the recognition and processing of DNA lesions. A damage recognition complex composed of 2 UvrA and 2 UvrB subunits scans DNA for abnormalities. Upon binding of the UvrA(2)B(2) complex to a putative damaged site, the DNA wraps around one UvrB monomer. DNA wrap is dependent on ATP binding by UvrB and probably causes local melting of the DNA helix, facilitating insertion of UvrB beta-hairpin between the DNA strands. Then UvrB probes one DNA strand for the presence of a lesion. If a lesion is found the UvrA subunits dissociate and the UvrB-DNA preincision complex is formed. This complex is subsequently bound by UvrC and the second UvrB is released. If no lesion is found, the DNA wraps around the other UvrB subunit that will check the other stand for damage. The sequence is that of UvrABC system protein B from Salmonella agona (strain SL483).